Here is a 472-residue protein sequence, read N- to C-terminus: Replicative helicase loading/DNA remodeling protein DnaB (472 aa).

Positions 1–112 are DDBH1; sequence MADYWKDVLP…ERLFIYELLP (112 aa). Residues 210–302 form a DDBH2-1 region; the sequence is DLFLAGLSET…VHLREGEQPA (93 aa). The tract at residues 303 to 411 is DDBH2-2; the sequence is EEDSLDGKLI…RQYLEWAEGK (109 aa). Residues 415–472 are disordered; that stretch reads SKRNQKVIREEKLPDWMTEKETASDSESGQQKLHPQDLEEQKKKMMEEMQKLKKYSAY. Composition is skewed to basic and acidic residues over residues 421-437 and 448-465; these read VIREEKLPDWMTEKETA and HPQDLEEQKKKMMEEMQK.

The protein belongs to the DnaB/DnaD family. Homotetramer. Also forms higher-order oligomers, can be induced by some ssDNA. The DNA replisome assembles sequentially on oriC in this order; DnaA, DnaD, DnaB, DnaI-DnaC helicase. In atomic force microscopy forms a square with a small central hole. Part of the replication restart primosome which assembles in this order; PriA, DnaD then DnaB. The preferred DNA substrate mimics an arrested DNA replication fork with unreplicated lagging strand. Interacts with DnaC, but probably not as a tetramer. Interacts with DnaD but no interaction with PriA was seen. Interacts with cell cycle regulator CcrZ. In early growth phase only full-length protein is detected, during late growth and stationary phase full-length and C-terminally truncated proteins are seen (at protein level). Truncated protein is only seen in cytoplasmic fractions.

The protein resides in the cytoplasm. Its subcellular location is the cell membrane. Helps DnaI load the DnaC replicative helicase onto single-stranded (ss)DNA. During DNA replication from the origin of replication (oriC) in the DNA replisome, DnaD is required after DnaA, before DnaB and before subsequent helicase DnaC loading. Component of the replication restart primosome, which reloads the replicative helicase on sites other than oriC. DnaB, DnaD and DnaI may also be required for a PriA-independent pathway of replication fork restart. DnaB and DnaD work together to allow DnaB access to ssDNA. DNA replication at oriC might originate on the inner face of the cell membrane; DnaB is essential for both replication initiation and cell membrane attachment of the origin region of the chromosome and plasmids. Weakly binds ssDNA, preferentially binds double-stranded (ds)DNA, and replication fork-like substrates. Remodels DNA, laterally compacts supercoiled plasmid and linear DNA, forms beads along the dsDNA. Together DnaB and DnaD form bipolar complexes on plasmid DNA. DnaB and DnaD are also required to load helicase on the repN plasmid origin of replication (oriN). This Bacillus subtilis (strain 168) protein is Replicative helicase loading/DNA remodeling protein DnaB.